Reading from the N-terminus, the 228-residue chain is MNASDLIRIMQFGDSVLPVGAFTFSNGVESAIQTGIVHDVATLKGFVLTALKQAASCDGMGVVVAHRAVVADDRDGIIRADWAVNNRKLNEESRLMATRMGKKLAEMSIHVVEHPLISWWLEQIKNGNTAGTYPVTQAVVMAAQGIGQREVVVMHQYGVAMTILSAAMRLMRVTHFDTQHILFELNHDIEKFCDIAEIGDINQMSSYVPIVDVLAAVHVKAHVRLFSN.

The protein belongs to the UreF family. As to quaternary structure, ureD, UreF and UreG form a complex that acts as a GTP-hydrolysis-dependent molecular chaperone, activating the urease apoprotein by helping to assemble the nickel containing metallocenter of UreC. The UreE protein probably delivers the nickel.

It is found in the cytoplasm. Functionally, required for maturation of urease via the functional incorporation of the urease nickel metallocenter. The sequence is that of Urease accessory protein UreF from Yersinia pestis bv. Antiqua (strain Antiqua).